The primary structure comprises 475 residues: Phosphoglucosamine mutase (475 aa).

Residue Ser-126 is the Phosphoserine intermediate of the active site. Mg(2+) contacts are provided by Ser-126, Asp-265, Asp-267, and Asp-269. Ser-126 bears the Phosphoserine mark.

The protein belongs to the phosphohexose mutase family. It depends on Mg(2+) as a cofactor. Activated by phosphorylation.

The enzyme catalyses alpha-D-glucosamine 1-phosphate = D-glucosamine 6-phosphate. Its function is as follows. Catalyzes the conversion of glucosamine-6-phosphate to glucosamine-1-phosphate. This Synechococcus sp. (strain ATCC 27144 / PCC 6301 / SAUG 1402/1) (Anacystis nidulans) protein is Phosphoglucosamine mutase.